We begin with the raw amino-acid sequence, 619 residues long: Pentatricopeptide repeat-containing protein At3g22470, mitochondrial (619 aa).

The transit peptide at 1–28 directs the protein to the mitochondrion; that stretch reads MIQRLIPLNRKASNFTQILEKGTSLLHY. 15 PPR repeats span residues 69-103, 104-138, 139-173, 174-208, 209-243, 244-278, 279-313, 314-348, 349-383, 384-418, 419-453, 454-488, 489-523, 524-558, and 559-593; these read TPID…GIEH, DMYT…GYEP, DTIT…KQRP, DLVT…GFQP, DEVT…NIKA, SVVQ…GIKA, DVVT…NIIP, DVVT…GIAP, DTIT…GCEP, DIVT…GLIP, NTIT…GVPP, SVVT…RMTL, GIGI…GVKP, DVVT…GCTP, and DDFT…GFSA.

The protein belongs to the PPR family. P subfamily.

The protein localises to the mitochondrion. This is Pentatricopeptide repeat-containing protein At3g22470, mitochondrial from Arabidopsis thaliana (Mouse-ear cress).